The sequence spans 615 residues: Increased rDNA silencing protein 4 (615 aa).

Disordered regions lie at residues 38–135 (SNEV…SSHS), 152–260 (LLGI…NRSQ), 277–304 (PSIASSNTTTTTSNQGSGLPNLVPNYSS), and 323–445 (KPKH…NEDK). The segment covering 50 to 65 (VSRNPQTRLSEPSLQK) has biased composition (polar residues). 2 stretches are compositionally biased toward low complexity: residues 121-135 (HSQSKLSSDNNSSHS) and 157-168 (SRSSSRNGSNES). Position 180 is a phosphoserine (serine 180). Positions 184-198 (LLTSFSSGRRLSSSS) are enriched in low complexity. A compositionally biased stretch (polar residues) spans 248-260 (NPDTSDVISNRSQ). Over residues 281-290 (SSNTTTTTSN) the composition is skewed to low complexity. The segment covering 365–377 (ENDHASSLHEGNL) has biased composition (basic and acidic residues). Residues 389–402 (DVYDDTDSDSESDQ) show a composition bias toward acidic residues. Positions 409-438 (KPRKRDRIKRKIRNSANKTAHHRPIHRTRD) are enriched in basic residues. The 112-residue stretch at 460-571 (ERKRYESMWV…QCVWDSVDRY (112 aa)) folds into the EH domain.

Belongs to the IRS4 family. Interacts with INP51.

With TAX4, acts as a positive regulator of INP51 activity and phosphatidylinositol 4,5-bisphosphate turnover. Negatively regulates signaling through the cell integrity pathway, including the MAP kinase SLT2. Also seems to be involved in rDNA silencing. This is Increased rDNA silencing protein 4 (IRS4) from Saccharomyces cerevisiae (strain ATCC 204508 / S288c) (Baker's yeast).